The following is a 264-amino-acid chain: Apolipoprotein A-I (264 aa).

The first 18 residues, 1-18, serve as a signal peptide directing secretion; sequence MKAVVLAVALVFLTGSQA. A run of 2 repeats spans residues 67–88 and 89–110. The interval 67–264 is 10 X approximate tandem repeats; the sequence is LNLLENWDTL…DKASETLTAQ (198 aa). The residue at position 109 (methionine 109) is a Methionine sulfoxide. A 3; half-length repeat occupies 111 to 121; sequence KDLEEVKQKVQ. A run of 3 repeats spans residues 122–143, 144–165, and 166–187. The stretch at 188–207 is one 7; truncated repeat; the sequence is PHSEQMRESLAQRLAELKSN. Position 193 is a methionine sulfoxide (methionine 193). Residues 208–229 form repeat 8; it reads PTLNEYHTRAKTHLKTLGEKAR. The stretch at 230-240 is one 9; half-length repeat; sequence PALEDLRHSLM. Residues methionine 240 and methionine 242 each carry the methionine sulfoxide modification. The stretch at 241-264 is repeat 10; the sequence is PMLETLKTQVQSVIDKASETLTAQ.

Belongs to the apolipoprotein A1/A4/E family. Homodimer. Interacts with APOA1BP and CLU. Component of a sperm activating protein complex (SPAP), consisting of APOA1, an immunoglobulin heavy chain, an immunoglobulin light chain and albumin. Interacts with NDRG1. Interacts with SCGB3A2. Interacts with NAXE and YJEFN3. Glycosylated. In terms of processing, palmitoylated. Post-translationally, may be acylated. Phosphorylation sites are present in the extracellular medium. As to expression, major protein of plasma HDL, also found in chylomicrons.

It localises to the secreted. Its function is as follows. Participates in the reverse transport of cholesterol from tissues to the liver for excretion by promoting cholesterol efflux from tissues and by acting as a cofactor for the lecithin cholesterol acyltransferase (LCAT). As part of the SPAP complex, activates spermatozoa motility. The protein is Apolipoprotein A-I (Apoa1) of Mus musculus (Mouse).